A 537-amino-acid chain; its full sequence is [Pyruvate dehydrogenase [acetyl-transferring]]-phosphatase 1, mitochondrial (537 aa).

The transit peptide at M1–Y71 directs the protein to the mitochondrion. The region spanning I109–F525 is the PPM-type phosphatase domain. The Mn(2+) site is built by D144 and G145. The residue at position 202 (K202) is an N6-acetyllysine. D418 and D516 together coordinate Mn(2+).

The protein belongs to the PP2C family. As to quaternary structure, heterodimer of a catalytic (PDP1) and a regulatory (PDPR) subunit. Mn(2+) is required as a cofactor. Requires Mg(2+) as cofactor.

It is found in the mitochondrion. The enzyme catalyses O-phospho-L-seryl-[pyruvate dehydrogenase E1 alpha subunit] + H2O = L-seryl-[pyruvate dehydrogenase E1 alpha subunit] + phosphate. Magnesium-dependent and calcium-stimulated. PDP1 activity strongly depends on its Ca(2+)-dependent binding to the lipoyl domain of E2 subunit of component of the pyruvate dehydrogenase complex. Its function is as follows. Mitochondrial enzyme that catalyzes the dephosphorylation and concomitant reactivation of the alpha subunit of the E1 component of the pyruvate dehydrogenase complex (PDC), thereby stimulating the conversion of pyruvate into acetyl-CoA. The sequence is that of [Pyruvate dehydrogenase [acetyl-transferring]]-phosphatase 1, mitochondrial from Homo sapiens (Human).